The following is a 123-amino-acid chain: Large ribosomal subunit protein bL12 (123 aa).

It belongs to the bacterial ribosomal protein bL12 family. Homodimer. Part of the ribosomal stalk of the 50S ribosomal subunit. Forms a multimeric L10(L12)X complex, where L10 forms an elongated spine to which 2 to 4 L12 dimers bind in a sequential fashion. Binds GTP-bound translation factors.

Its function is as follows. Forms part of the ribosomal stalk which helps the ribosome interact with GTP-bound translation factors. Is thus essential for accurate translation. This chain is Large ribosomal subunit protein bL12, found in Geobacillus thermodenitrificans (strain NG80-2).